A 607-amino-acid chain; its full sequence is NAD-dependent malic enzyme 2, mitochondrial (607 aa).

The N-terminal 32 residues, 1–32, are a transit peptide targeting the mitochondrion; sequence MMWKNIAGLSKAAAAARTHGSRRCFSTAIPGP. Y136 serves as the catalytic Proton donor. R189 contacts NAD(+). The active-site Proton acceptor is the K207. A divalent metal cation is bound by residues E278, D279, and D302. NAD(+) is bound by residues D302 and N449.

The protein belongs to the malic enzymes family. As to quaternary structure, homodimer. Heterodimer of two related subunits in NAD-MEH complex. Interacts with NAD-ME1. Mg(2+) serves as cofactor. Mn(2+) is required as a cofactor. As to expression, expressed in leaves, stems, flowers, and roots (at protein level). Present in pollen.

The protein localises to the mitochondrion. The catalysed reaction is (S)-malate + NAD(+) = pyruvate + CO2 + NADH. Its activity is regulated as follows. Activated by 2-ketoglutarate, phosphoenolpyruvate (PEP), fructose 1,6-biphosphate (FBP) and coenzyme A (acetyl-CoA and CoA) as homodimer and by oxaloacetate (OAA), 2-ketoglutarate, succinate, fumarate and CoA as heterodimer NAD-MEH. Repressed by succinate and fumarate as homodimer, in the presence of NAD(+) and competitively toward the substrate L-malate. In terms of biological role, involved in the regulation of sugars and amino acids metabolisms during the night period. This chain is NAD-dependent malic enzyme 2, mitochondrial (NAD-ME2), found in Arabidopsis thaliana (Mouse-ear cress).